Here is a 283-residue protein sequence, read N- to C-terminus: Elongation factor Ts (283 aa).

The involved in Mg(2+) ion dislocation from EF-Tu stretch occupies residues 80–83; sequence TDFV.

This sequence belongs to the EF-Ts family.

It is found in the cytoplasm. In terms of biological role, associates with the EF-Tu.GDP complex and induces the exchange of GDP to GTP. It remains bound to the aminoacyl-tRNA.EF-Tu.GTP complex up to the GTP hydrolysis stage on the ribosome. The protein is Elongation factor Ts of Haemophilus influenzae (strain PittGG).